A 108-amino-acid polypeptide reads, in one-letter code: MDQFECINVADAHQKLQEKEAVLVDIRDPQSFAMGHATQAFHLTNDTLGAFMRDNDFDTPVMVMCYHGNSSKGAAQYLLQQGYDVVYSIDGGFEAWQRQFPAEVAYGA.

The region spanning 17-105 (QEKEAVLVDI…WQRQFPAEVA (89 aa)) is the Rhodanese domain. Cys65 serves as the catalytic Cysteine persulfide intermediate.

The protein belongs to the GlpE family.

Its subcellular location is the cytoplasm. It catalyses the reaction thiosulfate + hydrogen cyanide = thiocyanate + sulfite + 2 H(+). The catalysed reaction is thiosulfate + [thioredoxin]-dithiol = [thioredoxin]-disulfide + hydrogen sulfide + sulfite + 2 H(+). Functionally, transferase that catalyzes the transfer of sulfur from thiosulfate to thiophilic acceptors such as cyanide or dithiols. May function in a CysM-independent thiosulfate assimilation pathway by catalyzing the conversion of thiosulfate to sulfite, which can then be used for L-cysteine biosynthesis. The polypeptide is Thiosulfate sulfurtransferase GlpE (Escherichia coli O45:K1 (strain S88 / ExPEC)).